The sequence spans 248 residues: Ribosomal RNA small subunit methyltransferase G (248 aa).

S-adenosyl-L-methionine contacts are provided by residues glycine 93, leucine 98, 143–144, and arginine 161; that span reads AE.

This sequence belongs to the methyltransferase superfamily. RNA methyltransferase RsmG family.

The protein resides in the cytoplasm. Its function is as follows. Specifically methylates the N7 position of guanine in position 518 of 16S rRNA. This is Ribosomal RNA small subunit methyltransferase G from Mycobacterium leprae (strain Br4923).